We begin with the raw amino-acid sequence, 514 residues long: Na(+)/H(+) antiporter NhaB (514 aa).

12 consecutive transmembrane segments (helical) span residues 23 to 43 (LALL…PFIA), 63 to 83 (PLLP…TSAA), 97 to 117 (LLLM…LFIF), 120 to 140 (LLLS…AAAF), 144 to 164 (FLDA…FYGI), 202 to 222 (LMMH…VGEP), 238 to 258 (FFLR…LTCM), 303 to 323 (AIIG…VGLI), 357 to 377 (LTVF…APII), 391 to 411 (LFYL…VGTI), 447 to 467 (ATPN…APLI), and 475 to 495 (VWMA…CVEF).

Belongs to the NhaB Na(+)/H(+) (TC 2.A.34) antiporter family.

The protein resides in the cell inner membrane. The enzyme catalyses 2 Na(+)(in) + 3 H(+)(out) = 2 Na(+)(out) + 3 H(+)(in). Its function is as follows. Na(+)/H(+) antiporter that extrudes sodium in exchange for external protons. The sequence is that of Na(+)/H(+) antiporter NhaB from Salmonella heidelberg (strain SL476).